The primary structure comprises 320 residues: Aspartate carbamoyltransferase catalytic subunit (320 aa).

Positions 68 and 69 each coordinate carbamoyl phosphate. K96 is an L-aspartate binding site. R118, H148, and Q151 together coordinate carbamoyl phosphate. Residues R181 and R236 each contribute to the L-aspartate site. Carbamoyl phosphate contacts are provided by G277 and P278.

The protein belongs to the aspartate/ornithine carbamoyltransferase superfamily. ATCase family. In terms of assembly, heterododecamer (2C3:3R2) of six catalytic PyrB chains organized as two trimers (C3), and six regulatory PyrI chains organized as three dimers (R2).

It catalyses the reaction carbamoyl phosphate + L-aspartate = N-carbamoyl-L-aspartate + phosphate + H(+). It functions in the pathway pyrimidine metabolism; UMP biosynthesis via de novo pathway; (S)-dihydroorotate from bicarbonate: step 2/3. Its function is as follows. Catalyzes the condensation of carbamoyl phosphate and aspartate to form carbamoyl aspartate and inorganic phosphate, the committed step in the de novo pyrimidine nucleotide biosynthesis pathway. The protein is Aspartate carbamoyltransferase catalytic subunit of Acidovorax ebreus (strain TPSY) (Diaphorobacter sp. (strain TPSY)).